The primary structure comprises 654 residues: Protein fem-1 homolog A (654 aa).

7 ANK repeats span residues 2 to 31 (DLHT…REEI), 40 to 70 (GGGT…SVEA), 82 to 111 (EGAP…SVNR), 115 to 145 (TNST…DLEV), 149 to 178 (HGHT…QVNR), 182 to 211 (KGNT…RMER), and 214 to 243 (YGMT…GHGQ). At Ser-108 the chain carries Phosphoserine. The segment at 241 to 265 (HGQLSGTELPGEGSSQMAGNHCSTP) is disordered. A compositionally biased stretch (polar residues) spans 253 to 263 (GSSQMAGNHCS). TPR repeat units follow at residues 283 to 317 (VEAL…RHQG) and 375 to 408 (SYYI…QQNN). ANK repeat units follow at residues 519-561 (NGFT…DPDS) and 565-594 (DNNT…HMDA). A Phosphoserine modification is found at Ser-608.

It belongs to the fem-1 family. In terms of assembly, component of a CRL2 E3 ubiquitin-protein ligase complex, also named ECS (Elongin BC-CUL2/5-SOCS-box protein) complex, composed of CUL2, Elongin BC (ELOB and ELOC), RBX1 and substrate-specific adapter FEM1A. Interacts with PTGER4. Interacts with NFKB1; the interaction is direct. In terms of processing, phosphorylated; highly phosphorylated in myoblasts and myotubes. Phosphorylation at Ser-108 and Ser-608 promote PGE2-EP4-mediated inhibition of inflammation. Dephosphorylated by protein phosphatase 2A (PP2A).

It is found in the mitochondrion. Its subcellular location is the cytoplasm. It participates in protein modification; protein ubiquitination. In terms of biological role, substrate-recognition component of a Cul2-RING (CRL2) E3 ubiquitin-protein ligase complex of the DesCEND (destruction via C-end degrons) pathway, which recognizes a C-degron located at the extreme C terminus of target proteins, leading to their ubiquitination and degradation. The C-degron recognized by the DesCEND pathway is usually a motif of less than ten residues and can be present in full-length proteins, truncated proteins or proteolytically cleaved forms. The CRL2(FEM1A) complex specifically recognizes proteins with an arginine at the C-terminus: recognizes and binds proteins ending with -Lys/Arg-Xaa-Arg and -Lys/Arg-Xaa-Xaa-Arg C-degrons, such as SIL1 or OR51B2, leading to their ubiquitination and degradation. Involved in PGE2-EP4-mediated inhibition of inflammation of macrophages via interaction with NFKB1 and PTGER4. Promotes inflammation in brain microglia through MAP2K4/MKK4-mediated signaling. The polypeptide is Protein fem-1 homolog A (Rattus norvegicus (Rat)).